Consider the following 454-residue polypeptide: Chromosomal replication initiator protein DnaA (454 aa).

The domain I, interacts with DnaA modulators stretch occupies residues 1 to 74 (MFDLDKFWQF…IQEAYAYADM (74 aa)). A domain II region spans residues 74-116 (MEIQPKFEVAGKEGPERLVTPQPRIKTNQEILENRRDEFAQDL). The tract at residues 117 to 333 (QLNSKYTFDT…GALVKVQAHA (217 aa)) is domain III, AAA+ region. 4 residues coordinate ATP: Gly-161, Gly-163, Lys-164, and Thr-165. Residues 334–454 (TIEREDINVD…VYDLKAMLEH (121 aa)) form a domain IV, binds dsDNA region.

Belongs to the DnaA family. In terms of assembly, oligomerizes as a right-handed, spiral filament on DNA at oriC.

The protein resides in the cytoplasm. Its function is as follows. Plays an essential role in the initiation and regulation of chromosomal replication. ATP-DnaA binds to the origin of replication (oriC) to initiate formation of the DNA replication initiation complex once per cell cycle. Binds the DnaA box (a 9 base pair repeat at the origin) and separates the double-stranded (ds)DNA. Forms a right-handed helical filament on oriC DNA; dsDNA binds to the exterior of the filament while single-stranded (ss)DNA is stabiized in the filament's interior. The ATP-DnaA-oriC complex binds and stabilizes one strand of the AT-rich DNA unwinding element (DUE), permitting loading of DNA polymerase. After initiation quickly degrades to an ADP-DnaA complex that is not apt for DNA replication. Binds acidic phospholipids. The chain is Chromosomal replication initiator protein DnaA from Lactobacillus johnsonii (strain CNCM I-12250 / La1 / NCC 533).